Here is a 337-residue protein sequence, read N- to C-terminus: Serpentine receptor class delta-50 (337 aa).

A run of 7 helical transmembrane segments spans residues 10-30, 48-68, 107-127, 147-167, 202-222, 250-270, and 280-300; these read VLILTIFYNAYFLLAISSQLL, IYLFNILGLQFISTFSAFVLQ, VLFHILQTSLIACATALIIAF, QLVISYCVPLVFLICEVLSPN, SSQTLMLMIGLYGTPFIALVF, GLTLQTLLPLICYCPGFTYYI, and LFVEFAVSPYGFVYTIFDPLL.

The protein belongs to the nematode receptor-like protein srd family.

The protein resides in the membrane. The sequence is that of Serpentine receptor class delta-50 from Caenorhabditis elegans.